We begin with the raw amino-acid sequence, 171 residues long: uncharacterized protein (171 aa).

The protein to M.jannaschii MJ0417.

This is an uncharacterized protein from Methanocaldococcus jannaschii (strain ATCC 43067 / DSM 2661 / JAL-1 / JCM 10045 / NBRC 100440) (Methanococcus jannaschii).